The primary structure comprises 335 residues: Nucleoid-associated protein YejK (335 aa).

The protein belongs to the YejK family.

The protein localises to the cytoplasm. It localises to the nucleoid. The polypeptide is Nucleoid-associated protein YejK (Salmonella arizonae (strain ATCC BAA-731 / CDC346-86 / RSK2980)).